We begin with the raw amino-acid sequence, 31 residues long: Nemertide alpha-2 (31 aa).

3 disulfide bridges follow: Cys-2/Cys-16, Cys-9/Cys-20, and Cys-15/Cys-26. Pro-28 and Pro-29 each carry 4-hydroxyproline.

Belongs to the nemertide family. As to expression, confined to the epidermis and to the mucus layer.

The protein localises to the secreted. Toxin with similar potency against both insect and mammalian sodium channels (Nav). Delays the inactivation of most Nav channels tested (B.germanica (BgNav1); EC(50)=87.2 nM, human Nav1.1/SCN1A; EC(50)=125.8 nM, rat Nav1.2/SCN2A; EC(50)=97.9 nM, rat Nav1.3/SCN3A; EC(50)=127.7 nM, rat Nav1.4/SCN4A; EC(50)=1150.3 nM, human Nav1.5/SCN5A; EC(50)=149.2 nM, mouse Nav1.6/SCN8A; EC(50)=1361.8 nM, human Nav1.9/SCN9A; EC(50)=1296.7 nM). Inactivation is completely prevented by a concentration of 1 uM, resulting in sustained, non-inactivating current. In addition, the toxin significantly enhances the recovery from inactivation, and the open state is not required for the toxin to interact with the channel. In vivo, injection into brine shrimp (Artemia salina) stops movement or causes death after 24 hours (EC(50)=2.9 uM). This is Nemertide alpha-2 from Lineus longissimus (Bootlace worm).